Here is a 347-residue protein sequence, read N- to C-terminus: UDP-N-acetylenolpyruvoylglucosamine reductase (347 aa).

The FAD-binding PCMH-type domain maps to 15 to 187 (FGIEQTCSYL…TAIGLKLPKR (173 aa)). Arg-163 is an active-site residue. The active-site Proton donor is Ser-233. Residue Glu-328 is part of the active site.

The protein belongs to the MurB family. FAD is required as a cofactor.

It localises to the cytoplasm. The catalysed reaction is UDP-N-acetyl-alpha-D-muramate + NADP(+) = UDP-N-acetyl-3-O-(1-carboxyvinyl)-alpha-D-glucosamine + NADPH + H(+). It participates in cell wall biogenesis; peptidoglycan biosynthesis. Functionally, cell wall formation. This chain is UDP-N-acetylenolpyruvoylglucosamine reductase, found in Vibrio parahaemolyticus serotype O3:K6 (strain RIMD 2210633).